A 621-amino-acid chain; its full sequence is Alpha-actinin-like protein 1 (621 aa).

Calponin-homology (CH) domains are found at residues 8-114 (SVQN…LRFT) and 123-230 (LTAK…HAFS). Residues 86–110 (LTNIGPADIVDGNLKLILGLIWTLI) form an actin-binding region. EF-hand domains follow at residues 388 to 419 (LSTI…LGPL), 487 to 549 (DGIT…EIVM), and 550 to 618 (EELE…AEDK).

The protein belongs to the alpha-actinin family.

The protein localises to the cytoplasm. It localises to the cytoskeleton. Binds to actin and is involved in actin-ring formation and organization. Plays a role in cytokinesis and is involved in septation. This Schizosaccharomyces pombe (strain 972 / ATCC 24843) (Fission yeast) protein is Alpha-actinin-like protein 1 (ain1).